The primary structure comprises 455 residues: ATP-dependent protease ATPase subunit HslU (455 aa).

ATP-binding positions include V23, 65 to 70 (GVGKTE), D266, E333, and R405.

The protein belongs to the ClpX chaperone family. HslU subfamily. As to quaternary structure, a double ring-shaped homohexamer of HslV is capped on each side by a ring-shaped HslU homohexamer. The assembly of the HslU/HslV complex is dependent on binding of ATP.

It localises to the cytoplasm. In terms of biological role, ATPase subunit of a proteasome-like degradation complex; this subunit has chaperone activity. The binding of ATP and its subsequent hydrolysis by HslU are essential for unfolding of protein substrates subsequently hydrolyzed by HslV. HslU recognizes the N-terminal part of its protein substrates and unfolds these before they are guided to HslV for hydrolysis. The chain is ATP-dependent protease ATPase subunit HslU from Xanthomonas euvesicatoria pv. vesicatoria (strain 85-10) (Xanthomonas campestris pv. vesicatoria).